The following is a 309-amino-acid chain: Homoserine kinase (309 aa).

91 to 101 is an ATP binding site; that stretch reads PIGSGLGSSAC.

Belongs to the GHMP kinase family. Homoserine kinase subfamily.

It localises to the cytoplasm. The enzyme catalyses L-homoserine + ATP = O-phospho-L-homoserine + ADP + H(+). Its pathway is amino-acid biosynthesis; L-threonine biosynthesis; L-threonine from L-aspartate: step 4/5. Its function is as follows. Catalyzes the ATP-dependent phosphorylation of L-homoserine to L-homoserine phosphate. The protein is Homoserine kinase of Salmonella agona (strain SL483).